The primary structure comprises 316 residues: ATP synthase gamma chain (316 aa).

Belongs to the ATPase gamma chain family. In terms of assembly, F-type ATPases have 2 components, CF(1) - the catalytic core - and CF(0) - the membrane proton channel. CF(1) has five subunits: alpha(3), beta(3), gamma(1), delta(1), epsilon(1). CF(0) has three main subunits: a, b and c.

It localises to the cellular thylakoid membrane. Produces ATP from ADP in the presence of a proton gradient across the membrane. The gamma chain is believed to be important in regulating ATPase activity and the flow of protons through the CF(0) complex. This Synechococcus sp. (strain WH7803) protein is ATP synthase gamma chain.